The sequence spans 450 residues: Probable 1,4-beta-D-glucan cellobiohydrolase C (450 aa).

An N-terminal signal peptide occupies residues 1–19 (MKHLASSIALTLLLPAVQA). One can recognise a CBM1 domain in the interval 20–55 (QQTVWGQCGGQGWSGPTNCVAGAACSTLNPYYAQCI). 2 disulfides stabilise this stretch: C27/C44 and C38/C54. The tract at residues 59 to 90 (TATSTTLSTTTTTQTTTKPTTTGPTTSAPTVT) is thr-rich linker. The disordered stretch occupies residues 63-89 (TTLSTTTTTQTTTKPTTTGPTTSAPTV). A catalytic region spans residues 91-450 (ASGNPFSGYQ…QLLTNANPSF (360 aa)). Residue D180 is part of the active site. 2 disulfide bridges follow: C181-C240 and C372-C419. The active-site Proton donor is D226. The active-site Nucleophile is the D405. N-linked (GlcNAc...) asparagine glycosylation is present at N409.

The protein belongs to the glycosyl hydrolase 6 (cellulase B) family.

It is found in the secreted. It catalyses the reaction Hydrolysis of (1-&gt;4)-beta-D-glucosidic linkages in cellulose and cellotetraose, releasing cellobiose from the non-reducing ends of the chains.. In terms of biological role, the biological conversion of cellulose to glucose generally requires three types of hydrolytic enzymes: (1) Endoglucanases which cut internal beta-1,4-glucosidic bonds; (2) Exocellobiohydrolases that cut the disaccharide cellobiose from the non-reducing end of the cellulose polymer chain; (3) Beta-1,4-glucosidases which hydrolyze the cellobiose and other short cello-oligosaccharides to glucose. This Neosartorya fischeri (strain ATCC 1020 / DSM 3700 / CBS 544.65 / FGSC A1164 / JCM 1740 / NRRL 181 / WB 181) (Aspergillus fischerianus) protein is Probable 1,4-beta-D-glucan cellobiohydrolase C (cbhC).